A 430-amino-acid chain; its full sequence is MTTLTLNTSLLSSRRILAAFSGGLDSTVLLHQLVLWRERHPDVTLRAIHIHHGLSPHADSWVRHCETVCERWQVPLVVERVTLADNGLGIEAHAREARYRAFAQTLLPGEVLATAQHLDDQCETFLLALKRGSGPAGLSAMGERSPFAGTLLLRPLLRETRKTLEQWAVRHGLCWIEDESNQDDAYDRNFLRLRALPLLQQRWPHFPAAVARSATLCAAQERLLDELLASDLTDCITTEGTLRLSPLMSMSDVRRAAILRRWLAMRNAPMPSRDALERIWQEVALARDDASPCLRFGDHEIRRYQSQLWWIKSVAGQHETTVAWPAWQTPLALPAGLGTVQLVPGGELRRPREEESVSIRFKAPGVLHIVGRNGGRKLKKIWQEQGIPPWRRDTTPLLFYGETLIAAAGVFVTREGAAEDKEGVSLVWHA.

21 to 26 (SGGLDS) provides a ligand contact to ATP.

Belongs to the tRNA(Ile)-lysidine synthase family.

It is found in the cytoplasm. The enzyme catalyses cytidine(34) in tRNA(Ile2) + L-lysine + ATP = lysidine(34) in tRNA(Ile2) + AMP + diphosphate + H(+). Functionally, ligates lysine onto the cytidine present at position 34 of the AUA codon-specific tRNA(Ile) that contains the anticodon CAU, in an ATP-dependent manner. Cytidine is converted to lysidine, thus changing the amino acid specificity of the tRNA from methionine to isoleucine. The sequence is that of tRNA(Ile)-lysidine synthase from Salmonella choleraesuis (strain SC-B67).